Reading from the N-terminus, the 510-residue chain is Protein fork head (510 aa).

2 disordered regions span residues 1–62 (MQKL…SPLA) and 175–205 (AMPP…YRRS). Gly residues predominate over residues 20–39 (SGGGGPPSGGGGGGGGGGGG). Residues 47-60 (NNPNPTSNGGSMSP) are compositionally biased toward low complexity. Ser-187 and Ser-190 each carry phosphoserine. A DNA-binding region (fork-head) is located at residues 209 to 300 (AKPPYSYISL…GNMFENGCYL (92 aa)). Residues 309-359 (EKKEAIRQLHKSPSHSSLEATSPGKKDHEDSHHMHHHHHSRLDHHQHHKEA) are disordered. Residues Ser-320, Ser-322, and Ser-330 each carry the phosphoserine modification. Residues 341-356 (HMHHHHHSRLDHHQHH) are compositionally biased toward basic residues.

The protein resides in the nucleus. Functionally, fkh promotes terminal as opposed to segmental development. In the absence of fkh, this developmental switch does not occur. The nuclear localization of the fkh protein suggest that fkh regulates the transcription of other, subordinate, genes. The protein is Protein fork head (fkh) of Drosophila melanogaster (Fruit fly).